Reading from the N-terminus, the 694-residue chain is Elongation factor G (694 aa).

Residues 8–287 form the tr-type G domain; the sequence is EDYRNFGIMA…AVVEFLPAPT (280 aa). Residues 17-24, 86-90, and 140-143 contribute to the GTP site; these read AHIDAGKT, DTPGH, and NKMD.

It belongs to the TRAFAC class translation factor GTPase superfamily. Classic translation factor GTPase family. EF-G/EF-2 subfamily.

Its subcellular location is the cytoplasm. Its function is as follows. Catalyzes the GTP-dependent ribosomal translocation step during translation elongation. During this step, the ribosome changes from the pre-translocational (PRE) to the post-translocational (POST) state as the newly formed A-site-bound peptidyl-tRNA and P-site-bound deacylated tRNA move to the P and E sites, respectively. Catalyzes the coordinated movement of the two tRNA molecules, the mRNA and conformational changes in the ribosome. The chain is Elongation factor G from Brucella canis (strain ATCC 23365 / NCTC 10854 / RM-666).